The following is a 279-amino-acid chain: uncharacterized protein (279 aa).

This is an uncharacterized protein from Caenorhabditis elegans.